The chain runs to 160 residues: Lymphocyte antigen 96 (160 aa).

The first 16 residues, 1 to 16 (MFPFMLFSTLFSSIFT), serve as a signal peptide directing secretion. Cystine bridges form between Cys-25-Cys-51, Cys-37-Cys-148, and Cys-95-Cys-105. Asn-26 carries an N-linked (GlcNAc...) asparagine glycan. N-linked (GlcNAc...) asparagine glycosylation occurs at Asn-114. Residues 119-123 (FSFQG) are interaction with lipopolysaccharide. The N-linked (GlcNAc...) asparagine glycan is linked to Asn-150.

As to quaternary structure, heterogeneous homomer formed from homodimers; disulfide-linked. Belongs to the lipopolysaccharide (LPS) receptor, a multi-protein complex containing at least CD14, LY96 and TLR4. Binds to the extracellular domains of TLR2 and TLR4. Ligand binding induces interaction with TLR4 and oligomerization of the complex. N-glycosylated.

It is found in the secreted. The protein localises to the extracellular space. In terms of biological role, binds bacterial lipopolysaccharide (LPS). Cooperates with TLR4 in the innate immune response to bacterial lipopolysaccharide (LPS), and with TLR2 in the response to cell wall components from Gram-positive and Gram-negative bacteria. Enhances TLR4-dependent activation of NF-kappa-B. Cells expressing both LY96 and TLR4, but not TLR4 alone, respond to LPS. The chain is Lymphocyte antigen 96 (LY96) from Bos taurus (Bovine).